A 63-amino-acid polypeptide reads, in one-letter code: Large ribosomal subunit protein bL28 (63 aa).

This sequence belongs to the bacterial ribosomal protein bL28 family.

The sequence is that of Large ribosomal subunit protein bL28 from Pelobacter propionicus (strain DSM 2379 / NBRC 103807 / OttBd1).